We begin with the raw amino-acid sequence, 89 residues long: Large ribosomal subunit protein bL27 (89 aa).

A disordered region spans residues 1–20 (MAHKKAGGSSRNGRDSESKR).

It belongs to the bacterial ribosomal protein bL27 family.

This is Large ribosomal subunit protein bL27 from Bartonella bacilliformis (strain ATCC 35685 / KC583 / Herrer 020/F12,63).